A 626-amino-acid polypeptide reads, in one-letter code: ATP-dependent RNA helicase cyt-19, mitochondrial (626 aa).

A Q motif motif is present at residues 74–103 (ADLAALGVHENVVRAITHGMGYENMTEVQS). The Helicase ATP-binding domain maps to 106–297 (ISPALKGKDI…RSYIDKNNFE (192 aa)). Residue 119–126 (AKTGTGKT) participates in ATP binding. The DEAD box signature appears at 241 to 244 (DEAD). Residues 329–493 (AMLELIEKAL…CASVNAADSG (165 aa)) form the Helicase C-terminal domain. Residues 569-626 (LRVETREHSMRPMGSGPGHRRDFNSRGPRRQSDDPFENALHRAQDLDRRPTRRQQASF) form a disordered region. Residues 578–626 (MRPMGSGPGHRRDFNSRGPRRQSDDPFENALHRAQDLDRRPTRRQQASF) are RNA-binding. Basic and acidic residues predominate over residues 607 to 617 (ALHRAQDLDRR).

The protein belongs to the DEAD box helicase family.

Its subcellular location is the mitochondrion matrix. The enzyme catalyses ATP + H2O = ADP + phosphate + H(+). Activated by exposed helices in a group I intron RNA. Its function is as follows. Acts as an RNA chaperone to resolve non-native structures formed during RNA folding to promote mitochondrial group I, but also group II, intron splicing. Functions predominantly by disrupting accessible RNA secondary structure and depends on spontaneous openings in tightly packed RNAs to gain access to RNA helices. The sequence is that of ATP-dependent RNA helicase cyt-19, mitochondrial from Neurospora crassa (strain ATCC 24698 / 74-OR23-1A / CBS 708.71 / DSM 1257 / FGSC 987).